Reading from the N-terminus, the 324-residue chain is MECIYCFETVSAVVPCAGKCDALICVDCFKGSMDALDTFPKCQCGLEYSPNELEPVLPAATLRGLDAKVKQVWDDNIHTVNAVNAQIDDCKKTYLDALPLAASIATQSFLRKALDDYAAKITKTAEEKPVDCPAEFCMGFRVGGKPCSVCGCTECAYCKALMNIDKPHTCKAEDLESIKAMDSNYVKCPECKKRVEKIDGCNDMTCAYCSTNFNYRTGLKQHGGSHNRIHLTHHQNLLSVKFQHSLSPSTLDALKRLETTMNVIESPKIYKRYNKKIAYEWISKRNMSTAIRREYGNISKEISALTVDDVELHLVSVLTKFNII.

This is an uncharacterized protein from Dryophytes versicolor (chameleon treefrog).